The chain runs to 2839 residues: PDZ domain-containing protein 2 (2839 aa).

The region spanning 85 to 182 is the PDZ 1 domain; sequence LSFGNIPVFG…LIMLRRFKHK (98 aa). The disordered stretch occupies residues 185–318; it reads STYNGNSSNS…RFSKGGKTDF (134 aa). Residues 189 to 202 show a composition bias toward low complexity; the sequence is GNSSNSSEPGETPT. The span at 280–296 shows a compositional bias: basic and acidic residues; sequence HLERSEVDRGTEHRIPK. Residues 334–419 form the PDZ 2 domain; the sequence is KMELLKESDG…MVQLVVASKE (86 aa). Residues 437-447 show a composition bias toward polar residues; sequence TSSVEDVSSWT. A disordered region spans residues 437-501; sequence TSSVEDVSSW…PKQGSNKIKL (65 aa). The span at 448–461 shows a compositional bias: acidic residues; the sequence is DNEDQEADGEEDEG. Residue S568 is modified to Phosphoserine. The PDZ 3 domain maps to 586-672; it reads IIGLYKEKGK…GLFVLTVRTK (87 aa). Residues 678–697 are compositionally biased toward polar residues; sequence LTPCSTPTHMSRSASPNFNT. Positions 678 to 723 are disordered; the sequence is LTPCSTPTHMSRSASPNFNTSGGASAGGSDEGSSSSLGRKTPGPKD. The region spanning 728–813 is the PDZ 4 domain; that stretch reads EVTLNKEPRV…GPVRLVIGRH (86 aa). Composition is skewed to polar residues over residues 832–843 and 894–908; these read YQESKEANSSPG and GCST…PSTS. 2 disordered regions span residues 832 to 852 and 879 to 921; these read YQES…KSPS and DFMV…ANSL. A phosphoserine mark is found at S944 and S948. Disordered stretches follow at residues 984–1033, 1062–1155, 1216–1493, 1530–1620, 1638–1712, 1809–1865, 1892–1976, 2009–2079, 2135–2166, 2178–2211, 2232–2251, 2353–2383, 2426–2481, and 2516–2564; these read SLPG…ISAP, SAEA…PCDL, KAAS…GAPA, FHED…LPTQ, PRES…SPLS, NQGT…DLSK, GKAK…SVSD, PDRG…GNIM, QVAE…SMAK, IRKA…GEDH, HFGR…DSQV, AKSG…GSLG, SRQN…SRSK, and ITPR…GEAA. Residues 1012 to 1022 are compositionally biased toward basic and acidic residues; the sequence is MDVHNQEERPR. 7 stretches are compositionally biased toward polar residues: residues 1092 to 1111, 1138 to 1147, 1221 to 1236, 1250 to 1269, 1305 to 1315, 1384 to 1401, and 1440 to 1453; these read RTDT…QQKS, SGSQTVNLTG, LGQQ…SDLI, SKTS…SQPA, TRSASETSTPH, SVSS…PSTD, and RSPS…GSQE. Over residues 1662 to 1672 the composition is skewed to low complexity; sequence SSQPSSLLEMS. Residues 1698 to 1711 are compositionally biased toward polar residues; sequence EVTSASSAMENSPL. S1850 is modified (phosphoserine). Over residues 1919–1931 the composition is skewed to polar residues; that stretch reads SPQTSHKTLSKAV. Positions 1936 to 1945 are enriched in basic and acidic residues; it reads HVADHEDPDR. The segment covering 2139–2152 has biased composition (low complexity); the sequence is SSTSHPSSLPSHAS. Low complexity predominate over residues 2370 to 2383; the sequence is GRRSSGSIVSGSLG. Composition is skewed to polar residues over residues 2426 to 2437, 2470 to 2480, and 2546 to 2559; these read SRQNPPETSSKG, RHTQPSPVSRS, and PKTS…SASD. The region spanning 2622 to 2706 is the PDZ 5 domain; that stretch reads FIVLNRKEGS…HKDALVVIKK (85 aa). The segment at 2709–2729 is disordered; that stretch reads DQPRPSARQEPPTANGKGLLS. The PDZ 6 domain occupies 2750-2835; the sequence is CVEVLKTSAG…GPVQLLIRKH (86 aa).

Interacts with SCN10A, CTNND2 and PKP4. Post-translationally, a secreted form is produced by caspase-mediated proteolytic cleavage. In terms of tissue distribution, isoform 2 is expressed (at protein level) in prostate and many prostate tumors.

It localises to the nucleus. The protein resides in the cytoplasm. Its subcellular location is the endoplasmic reticulum. The protein localises to the secreted. This Homo sapiens (Human) protein is PDZ domain-containing protein 2 (PDZD2).